A 111-amino-acid chain; its full sequence is Large ribosomal subunit protein uL22 (111 aa).

It belongs to the universal ribosomal protein uL22 family. As to quaternary structure, part of the 50S ribosomal subunit.

This protein binds specifically to 23S rRNA; its binding is stimulated by other ribosomal proteins, e.g. L4, L17, and L20. It is important during the early stages of 50S assembly. It makes multiple contacts with different domains of the 23S rRNA in the assembled 50S subunit and ribosome. In terms of biological role, the globular domain of the protein is located near the polypeptide exit tunnel on the outside of the subunit, while an extended beta-hairpin is found that lines the wall of the exit tunnel in the center of the 70S ribosome. The sequence is that of Large ribosomal subunit protein uL22 from Mycoplasma capricolum subsp. capricolum (strain California kid / ATCC 27343 / NCTC 10154).